The primary structure comprises 825 residues: MDNFKIYSTVITTAFLQVPHLYTTNRLWKPIEAPFLVEFLQKRISSKELKNTKAICHIDPSWVNLNASFIRDDMISIKATTDDMDLDAICRISLPLPMNTNDLTAELEKMKRILLDLSEKFNLELIITKEPAYFTPEQTGESKELCIYVHALGFRSNLMECEPQLLAFVDLIKKNGMTLPPQHYIIEPMELNSYSVLPLYMGVDMENFKHISRAFKTSIYAPSLITLSRDLKANPQIFFSGAVHSLSLLARKTLRESISVNSKSFFYRRLTNITPGKLLFIRKYYQQKVNQLILKYQSLIRVTNEYIEFQSISTNLLEMVIKNFTIQVLHEIVEVQISLNENCAMSPELIIDSFFGHTGNQIVVITPKEDSFNQLIVVGNQSSTDEASDTSILHYLSDFIMGSNQVINPNLRQIKAIFEIHPDFEDFISGKKNGKLTRIMELSACLIQLEMEEEDDNLYLNLVSDSFPDFKESFKNVINEFPAEESFFIPEVCHRPIIGTGGSLIQATMRKHNVFIQFSNSFNLPQNKISMIRYDNVIIRCPRKNKANICLAKNDLKQIVQEYDSLQSKTLIRFSSGQYRHILHVNGQKNIIGQIEKNENVYIMIPLKEPLDGTSQLSIQGNDENASRAANELVNSAFGYEYEFKIDQEIDPNKEYEFYNLIVVPFLQIMNIIVTFEKDLITFTFEKDTNENTLTKAIELLSNYLETQKTKIIFKKIIKKFVLGSASSKSNTSNSNTNGNFRSMNNAKSRTTIDNTSQSGASPQRHKMPVITTVGGAQAIKGYIPNTYYNGYGYGYGYTYEYDYNYANSNKAQTNNRHKYQNGRK.

The KH domain maps to 482-556 (PAEESFFIPE…ANICLAKNDL (75 aa)). The span at 727–740 (SSKSNTSNSNTNGN) shows a compositional bias: low complexity. Residues 727–766 (SSKSNTSNSNTNGNFRSMNNAKSRTTIDNTSQSGASPQRH) form a disordered region. Positions 741-762 (FRSMNNAKSRTTIDNTSQSGAS) are enriched in polar residues. Position 762 is a phosphoserine (Ser762).

Its subcellular location is the cytoplasm. This chain is KH domain-containing protein YLL032C, found in Saccharomyces cerevisiae (strain ATCC 204508 / S288c) (Baker's yeast).